The sequence spans 284 residues: Probable tRNA-splicing endonuclease subunit sen34 (284 aa).

Active-site residues include Y206, H214, and K245.

It belongs to the tRNA-intron endonuclease family. Heterotetramer composed of sen2, sen15, sen34 and sen54. Interacts directly with sen15.

The enzyme catalyses pretRNA = a 3'-half-tRNA molecule with a 5'-OH end + a 5'-half-tRNA molecule with a 2',3'-cyclic phosphate end + an intron with a 2',3'-cyclic phosphate and a 5'-hydroxyl terminus.. Its function is as follows. Constitutes one of the two catalytic subunit of the tRNA-splicing endonuclease complex, a complex responsible for identification and cleavage of the splice sites in pre-tRNA. It cleaves pre-tRNA at the 5'- and 3'-splice sites to release the intron. The products are an intron and two tRNA half-molecules bearing 2',3'-cyclic phosphate and 5'-OH termini. There are no conserved sequences at the splice sites, but the intron is invariably located at the same site in the gene, placing the splice sites an invariant distance from the constant structural features of the tRNA body. It probably carries the active site for 3'-splice site cleavage. In Schizosaccharomyces pombe (strain 972 / ATCC 24843) (Fission yeast), this protein is Probable tRNA-splicing endonuclease subunit sen34 (sen34).